We begin with the raw amino-acid sequence, 62 residues long: UPF0434 protein FTM_0733 (62 aa).

It belongs to the UPF0434 family.

This is UPF0434 protein FTM_0733 from Francisella tularensis subsp. mediasiatica (strain FSC147).